We begin with the raw amino-acid sequence, 317 residues long: MPMQGAQKRLLGSLNSTPTATPNLGLAANHTGAPCLEVSIPDGLFLSLGLVSLVENVLVVAAIAKNRNLHSPMYCFICCLALSDLLVSSSNMLETAVILLLEAGALATRASVVQQLQNTIDVLTCSSMLCSLCFLGAIAVDRHVSIFYALRYHSIMTLARARRAIAAIWVASVLSSTLFIAYCDHAXVLLCLVVFFLAMLVLMAVLYVHMLARACQHAQGITRLHQRQPPAHQGFGFRGAATLTILLGIFFLCWGPFFLHLTLVVLCPQHLTCSCIFKNFKVFLTLIICSTIIDPLIYAFRSQELRRTLKELLLCSW.

Residues 1–37 (MPMQGAQKRLLGSLNSTPTATPNLGLAANHTGAPCLE) are Extracellular-facing. Asn-29 is a glycosylation site (N-linked (GlcNAc...) asparagine). A helical transmembrane segment spans residues 38 to 63 (VSIPDGLFLSLGLVSLVENVLVVAAI). Residues 64 to 72 (AKNRNLHSP) are Cytoplasmic-facing. Residues 73 to 93 (MYCFICCLALSDLLVSSSNML) form a helical membrane-spanning segment. At 94-118 (ETAVILLLEAGALATRASVVQQLQN) the chain is on the extracellular side. Residues 119-140 (TIDVLTCSSMLCSLCFLGAIAV) form a helical membrane-spanning segment. Residues 141-163 (DRHVSIFYALRYHSIMTLARARR) lie on the Cytoplasmic side of the membrane. A helical transmembrane segment spans residues 164 to 183 (AIAAIWVASVLSSTLFIAYC). Over 184 to 191 (DHAXVLLC) the chain is Extracellular. A helical transmembrane segment spans residues 192 to 211 (LVVFFLAMLVLMAVLYVHML). The Cytoplasmic segment spans residues 212-240 (ARACQHAQGITRLHQRQPPAHQGFGFRGA). A helical transmembrane segment spans residues 241–266 (ATLTILLGIFFLCWGPFFLHLTLVVL). The Extracellular portion of the chain corresponds to 267–279 (CPQHLTCSCIFKN). Residues 280-300 (FKVFLTLIICSTIIDPLIYAF) traverse the membrane as a helical segment. The Cytoplasmic portion of the chain corresponds to 301-317 (RSQELRRTLKELLLCSW). The S-palmitoyl cysteine moiety is linked to residue Cys-315.

Belongs to the G-protein coupled receptor 1 family. Interacts with MGRN1, but does not undergo MGRN1-mediated ubiquitination; this interaction competes with GNAS-binding and thus inhibits agonist-induced cAMP production. Interacts with OPN3; the interaction results in a decrease in MC1R-mediated cAMP signaling and ultimately a decrease in melanin production in melanocytes.

The protein resides in the cell membrane. Receptor for MSH (alpha, beta and gamma) and ACTH. The activity of this receptor is mediated by G proteins which activate adenylate cyclase. Mediates melanogenesis, the production of eumelanin (black/brown) and phaeomelanin (red/yellow), via regulation of cAMP signaling in melanocytes. This chain is Melanocyte-stimulating hormone receptor (MC1R), found in Ateles paniscus (Black spider monkey).